Consider the following 243-residue polypeptide: NH(3)-dependent NAD(+) synthetase (243 aa).

31 to 38 (GVSGGIDS) serves as a coordination point for ATP. D37 contacts Mg(2+). Residue R110 coordinates deamido-NAD(+). Residue T130 participates in ATP binding. E135 is a binding site for Mg(2+). Deamido-NAD(+) contacts are provided by K143 and D150. 2 residues coordinate ATP: K159 and S181. 227–228 (HK) is a binding site for deamido-NAD(+).

This sequence belongs to the NAD synthetase family. Homodimer.

The enzyme catalyses deamido-NAD(+) + NH4(+) + ATP = AMP + diphosphate + NAD(+) + H(+). The protein operates within cofactor biosynthesis; NAD(+) biosynthesis; NAD(+) from deamido-NAD(+) (ammonia route): step 1/1. Functionally, catalyzes the ATP-dependent amidation of deamido-NAD to form NAD. Uses ammonia as a nitrogen source. The sequence is that of NH(3)-dependent NAD(+) synthetase from Malacoplasma penetrans (strain HF-2) (Mycoplasma penetrans).